Consider the following 150-residue polypeptide: MQIWVDADACPGVIKEIIYRAAERRQIQTTLVANQMLRTPPSKYIRAIQVAHGFDVADAHIVDQVVAGDLVVTADIPLASLVIERGAHALNPRGEMYTTANIRERLTMRNFMEDLRSAGVQTGGPNAFSQADRQAFANQLDRFLAKIPVA.

Belongs to the UPF0178 family.

The polypeptide is UPF0178 protein Daro_2879 (Dechloromonas aromatica (strain RCB)).